Consider the following 392-residue polypeptide: MAGVQRRILISRNEENLLNKGIGTKNVLGGKTTSTRTALSNISNIQRRPQLGGKVKKEDVGALEEKAPTNKSLGRMISQTNLLNEVQMKKNIQNLEDMAEVDLPINSMIDSFTDLEVDDIDLEDLGNPTLCAEYVKDIYKYMNKLEQRLVPGDYMPNQTEINFKMRSILVDWLIQVQSRFNLLQETLYLTIYILDRFLNKQNVKRAELQLVGVTAMLLASKYEEMYAPEIGDFVYITDNAYSKEKIRQMEQKMLKACEYDFSNPLCLHFLRRNSKAGAVDAQKHTLAKYLMELTLVEYEFITKLPSEVAAAALYLSMKLIDDSNWTPTLVHYSGYTEDAILPTVSKLSVLTLSMDNSKYQAVKNKYAASKFLRISRIPQLKGHVLNKFAERI.

The protein belongs to the cyclin family. Cyclin AB subfamily.

Its function is as follows. Essential for the control of the cell cycle at the G2/M (mitosis) transition. Interacts with the CDC2 protein kinase to form MPF. G2/M cyclins accumulate steadily during G2 and are abruptly destroyed at mitosis. The chain is G2/mitotic-specific cyclin-B from Hydra viridissima (Green hydra).